Here is a 465-residue protein sequence, read N- to C-terminus: Cruciferin CRU4 (465 aa).

Residues 1–22 form the signal peptide; the sequence is MGPTSLLSFFFTFLTLFHGFTA. 2 cysteine pairs are disulfide-bonded: Cys29-Cys62 and Cys105-Cys283. Cupin type-1 domains follow at residues 34 to 236 and 289 to 438; these read LNAL…ETAQ and ENLD…QEAR. Residue Thr108 is modified to Phosphothreonine. The segment at 112–135 is disordered; sequence SPVFGQGQGQEQGQGQGQGQGQGF. Residues 117–133 show a composition bias toward gly residues; that stretch reads QGQGQEQGQGQGQGQGQ. Tyr306 is subject to Phosphotyrosine. Residues Ser308 and Ser443 each carry the phosphoserine modification.

This sequence belongs to the 11S seed storage protein (globulins) family. Heterohexamer; each subunit is composed of an acidic and a basic chain derived from a single precursor and linked by a disulfide bond.

The protein resides in the rough endoplasmic reticulum. Functionally, this is a seed storage protein. The polypeptide is Cruciferin CRU4 (CRU4) (Brassica napus (Rape)).